The sequence spans 162 residues: 3-hydroxyacyl-[acyl-carrier-protein] dehydratase FabZ (162 aa).

H49 is an active-site residue.

The protein belongs to the thioester dehydratase family. FabZ subfamily.

The protein resides in the cytoplasm. It catalyses the reaction a (3R)-hydroxyacyl-[ACP] = a (2E)-enoyl-[ACP] + H2O. In terms of biological role, involved in unsaturated fatty acids biosynthesis. Catalyzes the dehydration of short chain beta-hydroxyacyl-ACPs and long chain saturated and unsaturated beta-hydroxyacyl-ACPs. The chain is 3-hydroxyacyl-[acyl-carrier-protein] dehydratase FabZ from Solibacter usitatus (strain Ellin6076).